The primary structure comprises 94 residues: Large ribosomal subunit protein uL23 (94 aa).

The protein belongs to the universal ribosomal protein uL23 family. As to quaternary structure, part of the 50S ribosomal subunit. Contacts protein L29, and trigger factor when it is bound to the ribosome.

Functionally, one of the early assembly proteins it binds 23S rRNA. One of the proteins that surrounds the polypeptide exit tunnel on the outside of the ribosome. Forms the main docking site for trigger factor binding to the ribosome. The protein is Large ribosomal subunit protein uL23 of Akkermansia muciniphila (strain ATCC BAA-835 / DSM 22959 / JCM 33894 / BCRC 81048 / CCUG 64013 / CIP 107961 / Muc).